Consider the following 43-residue polypeptide: Protein PsbN (43 aa).

Residues 7–27 traverse the membrane as a helical segment; that stretch reads LIVAIAAVTICITAFAIYTAF.

It belongs to the PsbN family.

It is found in the cellular thylakoid membrane. Its function is as follows. May play a role in photosystem I and II biogenesis. In Synechococcus sp. (strain JA-2-3B'a(2-13)) (Cyanobacteria bacterium Yellowstone B-Prime), this protein is Protein PsbN.